Consider the following 172-residue polypeptide: 3-hydroxydecanoyl-[acyl-carrier-protein] dehydratase (172 aa).

His71 is a catalytic residue.

The protein belongs to the thioester dehydratase family. FabA subfamily. As to quaternary structure, homodimer.

The protein localises to the cytoplasm. The enzyme catalyses a (3R)-hydroxyacyl-[ACP] = a (2E)-enoyl-[ACP] + H2O. It carries out the reaction (3R)-hydroxydecanoyl-[ACP] = (2E)-decenoyl-[ACP] + H2O. The catalysed reaction is (2E)-decenoyl-[ACP] = (3Z)-decenoyl-[ACP]. Its pathway is lipid metabolism; fatty acid biosynthesis. Its function is as follows. Necessary for the introduction of cis unsaturation into fatty acids. Catalyzes the dehydration of (3R)-3-hydroxydecanoyl-ACP to E-(2)-decenoyl-ACP and then its isomerization to Z-(3)-decenoyl-ACP. Can catalyze the dehydratase reaction for beta-hydroxyacyl-ACPs with saturated chain lengths up to 16:0, being most active on intermediate chain length. The sequence is that of 3-hydroxydecanoyl-[acyl-carrier-protein] dehydratase from Klebsiella pneumoniae (strain 342).